Here is a 490-residue protein sequence, read N- to C-terminus: Dipeptide and tripeptide permease A (490 aa).

The Cytoplasmic segment spans residues 1–34; the sequence is MSNANNNQPENVSLNAFKQPRAFYLIFSIELWER. Residues 35 to 55 form a helical membrane-spanning segment; it reads FGYYGLQGIMAVYLVKMLGMT. Over 56–59 the chain is Periplasmic; the sequence is EADS. The chain crosses the membrane as a helical span at residues 60-80; it reads ITLFSSFSALVYGFVAIGGWL. Residues 81-89 lie on the Cytoplasmic side of the membrane; that stretch reads GDKVLGAKR. The helical transmembrane segment at 90-110 threads the bilayer; the sequence is VIMLGALVLAIGYAFVAYSGH. A topological domain (periplasmic) is located at residue D111. Residues 112–132 traverse the membrane as a helical segment; that stretch reads LSLVYVGMATIAVGNGLFKAN. Topologically, residues 133 to 153 are cytoplasmic; that stretch reads PSSLLSTCYEKNDPRLDGAFT. Residues 154–174 form a helical membrane-spanning segment; sequence MYYMSVNIGSFFSMLATPWLA. Residues 175 to 176 lie on the Periplasmic side of the membrane; it reads AR. Residues 177–197 traverse the membrane as a helical segment; the sequence is FGWSVAFSLSVVGMLITLVNF. Residues 198-217 are Cytoplasmic-facing; it reads MMCRRWVKDQGSKPDFAPLQ. A helical transmembrane segment spans residues 218–238; that stretch reads VGKLMMTLVGVVILVAISTWL. Over 239–246 the chain is Periplasmic; that stretch reads LHNQTIAR. Residues 247–267 traverse the membrane as a helical segment; it reads WALAIISAGIILIFAKETFAL. The Cytoplasmic segment spans residues 268–274; it reads QGGARRK. Residues 275–295 form a helical membrane-spanning segment; it reads MIVAFLLMLEAVVFFVLYSQM. The Periplasmic portion of the chain corresponds to 296–320; sequence PTSLNFFAIHNVEHSIFGIAFEPEQ. The helical transmembrane segment at 321 to 341 threads the bilayer; sequence YQALNPFWIMVASPILAAIYN. Residues 342 to 352 lie on the Cytoplasmic side of the membrane; sequence KMGDRLPMPHK. Residues 353-373 traverse the membrane as a helical segment; sequence FAIGMVLCSGAFLVLPWGASF. Topologically, residues 374–383 are periplasmic; sequence ANEAGIVSVN. A helical transmembrane segment spans residues 384-404; sequence WLILSYALQSIGELMISGLGL. The Cytoplasmic segment spans residues 405–414; sequence AMVAQLVPQR. The helical transmembrane segment at 415-435 threads the bilayer; it reads LMGFIMGSWFLTTAAAALIAG. The Periplasmic segment spans residues 436 to 460; it reads KVAALTAVPGGEVADPHASLAIYSH. The helical transmembrane segment at 461-481 threads the bilayer; that stretch reads VFMQIGLATAVIAVLMLLTAP. The Cytoplasmic portion of the chain corresponds to 482-490; sequence KLNRMTLGD.

Belongs to the major facilitator superfamily. Proton-dependent oligopeptide transporter (POT/PTR) (TC 2.A.17) family. DtpA subfamily.

The protein localises to the cell inner membrane. Functionally, proton-dependent permease that transports di- and tripeptides. The chain is Dipeptide and tripeptide permease A from Edwardsiella piscicida.